A 65-amino-acid chain; its full sequence is Small, acid-soluble spore protein H 1 (65 aa).

It belongs to the SspH family.

It localises to the spore core. The protein is Small, acid-soluble spore protein H 1 of Clostridium botulinum (strain Langeland / NCTC 10281 / Type F).